The following is a 186-amino-acid chain: Ribonuclease M5 (186 aa).

The region spanning 6–89 (SQVIVVEGRD…AFLKRDEAVP (84 aa)) is the Toprim domain. 3 residues coordinate Mg(2+): E12, D58, and D60.

The protein belongs to the ribonuclease M5 family. The cofactor is Mg(2+).

The protein localises to the cytoplasm. The catalysed reaction is Endonucleolytic cleavage of RNA, removing 21 and 42 nucleotides, respectively, from the 5'- and 3'-termini of a 5S-rRNA precursor.. In terms of biological role, required for correct processing of both the 5' and 3' ends of 5S rRNA precursor. Cleaves both sides of a double-stranded region yielding mature 5S rRNA in one step. The protein is Ribonuclease M5 of Streptococcus pneumoniae (strain ATCC BAA-255 / R6).